Reading from the N-terminus, the 141-residue chain is ATP synthase epsilon chain, chloroplastic (141 aa).

It belongs to the ATPase epsilon chain family. F-type ATPases have 2 components, F(1) - the catalytic core - and F(0) - the membrane proton channel. F(1) has five subunits: alpha(3), beta(3), gamma(1), delta(1), epsilon(1). F(0) has four main subunits: a(1), b(1), b'(1) and c(10-14). The alpha and beta chains form an alternating ring which encloses part of the gamma chain. F(1) is attached to F(0) by a central stalk formed by the gamma and epsilon chains, while a peripheral stalk is formed by the delta, b and b' chains.

Its subcellular location is the plastid. The protein localises to the chloroplast thylakoid membrane. Its function is as follows. F(1)F(0) ATP synthase produces ATP from ADP in the presence of a proton or sodium gradient. F-type ATPases consist of two structural domains, F(1) containing the extramembraneous catalytic core and F(0) containing the membrane proton channel, linked together by a central stalk and a peripheral stalk. During catalysis, ATP synthesis in the catalytic domain of F(1) is coupled via a rotary mechanism of the central stalk subunits to proton translocation. This chain is ATP synthase epsilon chain, chloroplastic, found in Chlamydomonas reinhardtii (Chlamydomonas smithii).